A 376-amino-acid chain; its full sequence is 23S rRNA (uracil(747)-C(5))-methyltransferase RlmC (376 aa).

The [4Fe-4S] cluster site is built by cysteine 3, cysteine 11, cysteine 14, and cysteine 87. Residues glutamine 212, phenylalanine 241, glutamate 262, and asparagine 307 each coordinate S-adenosyl-L-methionine. Cysteine 334 functions as the Nucleophile in the catalytic mechanism.

This sequence belongs to the class I-like SAM-binding methyltransferase superfamily. RNA M5U methyltransferase family. RlmC subfamily.

The catalysed reaction is uridine(747) in 23S rRNA + S-adenosyl-L-methionine = 5-methyluridine(747) in 23S rRNA + S-adenosyl-L-homocysteine + H(+). In terms of biological role, catalyzes the formation of 5-methyl-uridine at position 747 (m5U747) in 23S rRNA. This Salmonella newport (strain SL254) protein is 23S rRNA (uracil(747)-C(5))-methyltransferase RlmC.